The primary structure comprises 192 residues: Ion-translocating oxidoreductase complex subunit A (192 aa).

6 consecutive transmembrane segments (helical) span residues 5 to 25 (LLLL…FLGL), 38 to 58 (AIGM…LSFL), 72 to 92 (LRTM…EMLV), 102 to 122 (ALGI…VALL), 134 to 154 (AIYG…FSAM), and 171 to 191 (AIAM…AGLI).

It belongs to the NqrDE/RnfAE family. The complex is composed of six subunits: RnfA, RnfB, RnfC, RnfD, RnfE and RnfG.

It is found in the cell inner membrane. Part of a membrane-bound complex that couples electron transfer with translocation of ions across the membrane. This is Ion-translocating oxidoreductase complex subunit A from Shewanella denitrificans (strain OS217 / ATCC BAA-1090 / DSM 15013).